Reading from the N-terminus, the 235-residue chain is Small ribosomal subunit protein uS3 (235 aa).

Residues I39–R107 enclose the KH type-2 domain. Residues Q213–R235 are disordered.

This sequence belongs to the universal ribosomal protein uS3 family. As to quaternary structure, part of the 30S ribosomal subunit. Forms a tight complex with proteins S10 and S14.

In terms of biological role, binds the lower part of the 30S subunit head. Binds mRNA in the 70S ribosome, positioning it for translation. This chain is Small ribosomal subunit protein uS3, found in Ruegeria pomeroyi (strain ATCC 700808 / DSM 15171 / DSS-3) (Silicibacter pomeroyi).